The chain runs to 417 residues: Gamma-glutamyl phosphate reductase (417 aa).

This sequence belongs to the gamma-glutamyl phosphate reductase family.

It is found in the cytoplasm. The enzyme catalyses L-glutamate 5-semialdehyde + phosphate + NADP(+) = L-glutamyl 5-phosphate + NADPH + H(+). The protein operates within amino-acid biosynthesis; L-proline biosynthesis; L-glutamate 5-semialdehyde from L-glutamate: step 2/2. In terms of biological role, catalyzes the NADPH-dependent reduction of L-glutamate 5-phosphate into L-glutamate 5-semialdehyde and phosphate. The product spontaneously undergoes cyclization to form 1-pyrroline-5-carboxylate. In Escherichia coli O127:H6 (strain E2348/69 / EPEC), this protein is Gamma-glutamyl phosphate reductase.